The sequence spans 78 residues: UPF0291 protein Exig_1097 (78 aa).

Residues 57–78 form a disordered region; the sequence is EEGTDVTPEKLKQAQEEERNKQ. Residues 63–78 show a composition bias toward basic and acidic residues; the sequence is TPEKLKQAQEEERNKQ.

It belongs to the UPF0291 family.

It localises to the cytoplasm. This Exiguobacterium sibiricum (strain DSM 17290 / CCUG 55495 / CIP 109462 / JCM 13490 / 255-15) protein is UPF0291 protein Exig_1097.